The primary structure comprises 241 residues: ATP-dependent dethiobiotin synthetase BioD (241 aa).

13-18 serves as a coordination point for ATP; sequence DIGKTV. Residue threonine 17 participates in Mg(2+) binding. The active site involves lysine 38. Residue serine 42 participates in substrate binding. ATP contacts are provided by residues aspartate 55, 116 to 119, and 180 to 181; these read EGSG and NK. 2 residues coordinate Mg(2+): aspartate 55 and glutamate 116.

The protein belongs to the dethiobiotin synthetase family. As to quaternary structure, homodimer. It depends on Mg(2+) as a cofactor.

It localises to the cytoplasm. The enzyme catalyses (7R,8S)-7,8-diammoniononanoate + CO2 + ATP = (4R,5S)-dethiobiotin + ADP + phosphate + 3 H(+). Its pathway is cofactor biosynthesis; biotin biosynthesis; biotin from 7,8-diaminononanoate: step 1/2. Functionally, catalyzes a mechanistically unusual reaction, the ATP-dependent insertion of CO2 between the N7 and N8 nitrogen atoms of 7,8-diaminopelargonic acid (DAPA, also called 7,8-diammoniononanoate) to form a ureido ring. The polypeptide is ATP-dependent dethiobiotin synthetase BioD (Clostridium kluyveri (strain NBRC 12016)).